We begin with the raw amino-acid sequence, 69 residues long: Mitotic-spindle organizing protein 1 (69 aa).

The protein belongs to the MOZART1 family. Part of the gamma-tubulin complex.

Its subcellular location is the cytoplasm. The protein resides in the cytoskeleton. The protein localises to the microtubule organizing center. It is found in the spindle. Its function is as follows. Required for gamma-tubulin complex recruitment to the microtubule organizing centers (MTOCs). The chain is Mitotic-spindle organizing protein 1 from Picea sitchensis (Sitka spruce).